Reading from the N-terminus, the 673-residue chain is Estrogen receptor beta (673 aa).

A modulating region spans residues 1–181 (MASSPGLDPH…SAVGKADMHF (181 aa)). 2 NR C4-type zinc fingers span residues 182-202 (CAVC…CEGC) and 218-242 (CPAT…LRKC). The segment at residues 182 to 247 (CAVCHDYASG…RLRKCYEVGM (66 aa)) is a DNA-binding region (nuclear receptor). The NR LBD domain occupies 316-552 (SPEEFISRIM…DLLLEMLDAN (237 aa)). Residues 553–602 (TSSGGSQPSSSPSSETYSDQHQYPQPPSHLHPGSEQTTADHAIVPPLGPT) are disordered. Residues 554–566 (SSGGSQPSSSPSS) are compositionally biased toward low complexity.

It belongs to the nuclear hormone receptor family. NR3 subfamily. As to quaternary structure, binds DNA as a homodimer. Can form a heterodimer with ER-alpha. In terms of tissue distribution, abundant in the liver and testes, less abundant in the ovary and barely detectable in the muscle.

The protein resides in the nucleus. Binds estrogens with an affinity similar to that of ER-alpha, and activates expression of reporter genes containing estrogen response elements (ERE) in an estrogen-dependent manner. This Micropogonias undulatus (Atlantic croaker) protein is Estrogen receptor beta (esr2).